Reading from the N-terminus, the 80-residue chain is Defensin-like protein 13 (80 aa).

An N-terminal signal peptide occupies residues 1–29 (MAKSATIVTLFFAALVFFAALEAPMVVEA). Position 30 is a pyrrolidone carboxylic acid (Gln30). Cystine bridges form between Cys33–Cys80, Cys44–Cys65, Cys50–Cys74, and Cys54–Cys76.

It belongs to the DEFL family. As to quaternary structure, forms oligomers in its native state. In terms of tissue distribution, expressed predominantly in siliques and dry seeds.

It is found in the secreted. Confers broad-spectrum resistance to pathogens. Possesses antifungal activity sensitive to inorganic cations in vitro. In Arabidopsis thaliana (Mouse-ear cress), this protein is Defensin-like protein 13 (PDF1.1).